A 72-amino-acid chain; its full sequence is Disintegrin cotiarin (72 aa).

The 72-residue stretch at Glu1–His72 folds into the Disintegrin domain. Disulfide bonds link Cys6–Cys21, Cys8–Cys16, Cys15–Cys38, Cys29–Cys35, Cys34–Cys59, and Cys47–Cys66. The Cell attachment site signature appears at Arg51–Asp53. The segment at Arg51 to His72 is disordered.

Belongs to the venom metalloproteinase (M12B) family. P-II subfamily. P-IIa sub-subfamily. In terms of assembly, monomer. Expressed by the venom gland.

It localises to the secreted. Its function is as follows. Inhibits fibrinogen interaction with platelets. Acts by binding to alpha-IIb/beta-3 (ITGA2B/ITGB3) on the platelet surface and inhibits aggregation induced by ADP, thrombin, platelet-activating factor and collagen. The chain is Disintegrin cotiarin from Bothrops cotiara (Cotiara).